A 92-amino-acid chain; its full sequence is Small ribosomal subunit protein bS18 (92 aa).

Belongs to the bacterial ribosomal protein bS18 family. As to quaternary structure, part of the 30S ribosomal subunit. Forms a tight heterodimer with protein bS6.

In terms of biological role, binds as a heterodimer with protein bS6 to the central domain of the 16S rRNA, where it helps stabilize the platform of the 30S subunit. The protein is Small ribosomal subunit protein bS18 of Caulobacter sp. (strain K31).